Consider the following 205-residue polypeptide: Melanocortin-2 receptor accessory protein 2 (205 aa).

N-linked (GlcNAc...) asparagine glycosylation occurs at asparagine 9. A helical membrane pass occupies residues 45–65 (IVIGFWVGLAVFVIFMFFVLT). Serine 89 is modified (phosphoserine).

The protein belongs to the MRAP family. Homodimer and heterodimer. Forms antiparallel homodimers and heterodimers with MRAP. Interacts with MC1R, MC2R, MC3R, MC4R and MC5R. As to expression, expressed in the adrenal gland and brain. Not expressed in other tissues.

The protein localises to the cell membrane. Its subcellular location is the endoplasmic reticulum membrane. Modulator of melanocortin receptor 4 (MC4R), a receptor involved in energy homeostasis. Plays a central role in the control of energy homeostasis and body weight regulation by increasing ligand-sensitivity of MC4R and MC4R-mediated generation of cAMP. May also act as a negative regulator of MC2R: competes with MRAP for binding to MC2R and impairs the binding of corticotropin (ACTH) to MC2R. May also regulate activity of other melanocortin receptors (MC1R, MC3R and MC5R); however, additional evidence is required in vivo. The polypeptide is Melanocortin-2 receptor accessory protein 2 (MRAP2) (Homo sapiens (Human)).